A 152-amino-acid polypeptide reads, in one-letter code: Ribosomal RNA large subunit methyltransferase H (152 aa).

Residues leucine 65, glycine 96, and 115–120 (LGPMTW) each bind S-adenosyl-L-methionine.

It belongs to the RNA methyltransferase RlmH family. In terms of assembly, homodimer.

The protein resides in the cytoplasm. The enzyme catalyses pseudouridine(1915) in 23S rRNA + S-adenosyl-L-methionine = N(3)-methylpseudouridine(1915) in 23S rRNA + S-adenosyl-L-homocysteine + H(+). Its function is as follows. Specifically methylates the pseudouridine at position 1915 (m3Psi1915) in 23S rRNA. This Gluconacetobacter diazotrophicus (strain ATCC 49037 / DSM 5601 / CCUG 37298 / CIP 103539 / LMG 7603 / PAl5) protein is Ribosomal RNA large subunit methyltransferase H.